A 206-amino-acid chain; its full sequence is MTFVFDHPLIKDKLTRMRKIQTESTKFRDNLKEITQLMAYEVTKDLELDRIEIETPITKMLGYKLKEKIVLIPILRAGLGMVDGLKELIPTASIGHIGIYRDEETAQPKEYYCKMPANLTNGNAIILDPMLATGGSASKAIEIIKTYRPKTISFICLVAAPEGLKEIEKNHPDINIYVAALDEKLNEKYYIVPGLGDAGDRIFGTK.

Residues arginine 76, arginine 101, and 128–136 (DPMLATGGS) each bind 5-phospho-alpha-D-ribose 1-diphosphate. Uracil is bound by residues isoleucine 191 and 196–198 (GDA). Aspartate 197 is a binding site for 5-phospho-alpha-D-ribose 1-diphosphate.

Belongs to the UPRTase family. Mg(2+) is required as a cofactor.

It carries out the reaction UMP + diphosphate = 5-phospho-alpha-D-ribose 1-diphosphate + uracil. Its pathway is pyrimidine metabolism; UMP biosynthesis via salvage pathway; UMP from uracil: step 1/1. With respect to regulation, allosterically activated by GTP. Its function is as follows. Catalyzes the conversion of uracil and 5-phospho-alpha-D-ribose 1-diphosphate (PRPP) to UMP and diphosphate. This is Uracil phosphoribosyltransferase from Malacoplasma penetrans (strain HF-2) (Mycoplasma penetrans).